A 547-amino-acid polypeptide reads, in one-letter code: Fimbria adhesin EcpD (547 aa).

The first 20 residues, 1 to 20 (MRVNLLIAMIIFALIWPATA), serve as a signal peptide directing secretion.

Belongs to the EcpD/MatE family. As to quaternary structure, forms polymers. Interacts with EcpA.

It localises to the fimbrium. Part of the ecpRABCDE operon, which encodes the E.coli common pilus (ECP). ECP is found in both commensal and pathogenic strains and plays a dual role in early-stage biofilm development and host cell recognition. Tip pilus adhesin, which is required for assembly of EcpA into fibers. In Escherichia coli O127:H6 (strain E2348/69 / EPEC), this protein is Fimbria adhesin EcpD (ecpD).